The primary structure comprises 555 residues: Suppressor of tumorigenicity 7 protein-like (555 aa).

Helical transmembrane passes span 32-52 (APWA…YAAL), 76-96 (FYFA…VFEW), 504-524 (LPFF…LALL), and 531-551 (LMVV…APSV).

Belongs to the ST7 family.

The protein localises to the membrane. The protein is Suppressor of tumorigenicity 7 protein-like (ST7L) of Gallus gallus (Chicken).